Reading from the N-terminus, the 369-residue chain is tRNA/tmRNA (uracil-C(5))-methyltransferase (369 aa).

Gln-190, Tyr-218, Asn-223, Glu-239, and Asp-301 together coordinate S-adenosyl-L-methionine. Cys-326 serves as the catalytic Nucleophile. Glu-360 serves as the catalytic Proton acceptor.

It belongs to the class I-like SAM-binding methyltransferase superfamily. RNA M5U methyltransferase family. TrmA subfamily.

The catalysed reaction is uridine(54) in tRNA + S-adenosyl-L-methionine = 5-methyluridine(54) in tRNA + S-adenosyl-L-homocysteine + H(+). It catalyses the reaction uridine(341) in tmRNA + S-adenosyl-L-methionine = 5-methyluridine(341) in tmRNA + S-adenosyl-L-homocysteine + H(+). Dual-specificity methyltransferase that catalyzes the formation of 5-methyluridine at position 54 (m5U54) in all tRNAs, and that of position 341 (m5U341) in tmRNA (transfer-mRNA). The polypeptide is tRNA/tmRNA (uracil-C(5))-methyltransferase (Vibrio vulnificus (strain YJ016)).